The primary structure comprises 307 residues: Ornithine carbamoyltransferase (307 aa).

Carbamoyl phosphate is bound by residues 50-53 (STRT), Q77, R101, and 128-131 (HPCQ). L-ornithine is bound by residues N160, D224, and 228–229 (SM). Carbamoyl phosphate is bound by residues 264-265 (CL) and R292.

It belongs to the aspartate/ornithine carbamoyltransferase superfamily. OTCase family.

It is found in the cytoplasm. The enzyme catalyses carbamoyl phosphate + L-ornithine = L-citrulline + phosphate + H(+). It participates in amino-acid biosynthesis; L-arginine biosynthesis; L-arginine from L-ornithine and carbamoyl phosphate: step 1/3. Functionally, reversibly catalyzes the transfer of the carbamoyl group from carbamoyl phosphate (CP) to the N(epsilon) atom of ornithine (ORN) to produce L-citrulline. In Clavibacter sepedonicus (Clavibacter michiganensis subsp. sepedonicus), this protein is Ornithine carbamoyltransferase.